The sequence spans 426 residues: Endothelin-1 receptor (426 aa).

The signal sequence occupies residues 1 to 20 (METFCLKVTFWVALVGYVIG). Residues 21–79 (DHPESYSTNLSTPVDFTTFHGTELSFLVTTHRPTNLALPSNGSMHSYCPQQTKITSAFK) lie on the Extracellular side of the membrane. N-linked (GlcNAc...) asparagine glycosylation is found at Asn-29 and Asn-61. The chain crosses the membrane as a helical span at residues 80-101 (YINTVISCTIFIVGMVGNATLL). Residues 102–111 (RIIYQNKCMR) are Cytoplasmic-facing. A helical membrane pass occupies residues 112–131 (NGPNALIASLALGDLIYVVI). Over 132 to 158 (DLPINVFKLLAGRWPFDHNDFGVFLCK) the chain is Extracellular. Cys-157 and Cys-238 are oxidised to a cystine. A helical transmembrane segment spans residues 159–180 (LFPFLQKSSVGITVLNLCALSV). The Cytoplasmic segment spans residues 181-204 (DRYRAVASWSRVQGIGIPLITAIE). The helical transmembrane segment at 205–228 (IVSIWILSFILAIPEAIGFVMVPF) threads the bilayer. Residues 229–255 (EYKGEQHKTCMLNATSKFMEFYQDVKD) lie on the Extracellular side of the membrane. A glycan (N-linked (GlcNAc...) asparagine) is linked at Asn-241. Residues 256–277 (WWLFGFYFCMPLVCTAIFYTLM) form a helical membrane-spanning segment. The Cytoplasmic segment spans residues 278–305 (TCEMLNRRNGSLRIALSEHLKQRREVAK). Residues 306-327 (TVFCLVVIFALCWFPLHLSRIL) traverse the membrane as a helical segment. Over 328 to 346 (KKTVYDEMDKNRCELLSFL) the chain is Extracellular. A helical transmembrane segment spans residues 347–371 (RLMDYIGINLATMNSCINPIALYFV). The Cytoplasmic portion of the chain corresponds to 372-426 (SKKFKNCFQSCLCCCCYQSKSLMTSVPMNGTSIQWKNHEQNNHNTERSSHKDSIN). Ser-424 is subject to Phosphoserine.

Belongs to the G-protein coupled receptor 1 family. Endothelin receptor subfamily. EDNRA sub-subfamily. As to quaternary structure, interacts with HDAC7 and KAT5.

Its subcellular location is the cell membrane. Receptor for endothelin-1. Mediates its action by association with G proteins that activate a phosphatidylinositol-calcium second messenger system. The rank order of binding affinities for ET-A is: ET1 &gt; ET2 &gt;&gt; ET3. This Canis lupus familiaris (Dog) protein is Endothelin-1 receptor.